The sequence spans 96 residues: Bacterial microcompartment shell protein EutM (96 aa).

The 85-residue stretch at 3 to 87 (ALGMIETRGL…PHGDLEEVFP (85 aa)) folds into the BMC domain.

This sequence belongs to the bacterial microcompartments protein family. Homohexamer with a central pore of up to 8.6 Angstroms diameter. The hexamers pack into a two-dimensional array. Interacts with EutQ; a probably cytoplasm-facing helix (Val-49 to Gln-64) interacts with N-terminus of EutQ.

The protein localises to the bacterial microcompartment. It functions in the pathway amine and polyamine degradation; ethanolamine degradation. In terms of biological role, probably a major component of the bacterial microcompartment (BMC) shell dedicated to ethanolamine degradation. Each homohexamer has a central pore with an opening of up to 8.6 Angstroms. A positively-charged funnel leads to the pore from each side of the hexamer. The pore probably allows metabolite passage into and out of the BMC. Expression of eutK, eutL, eutM, eutN, eutS (eutSMNLK) in E.coli leads to formation of a single BMC. Expression alone leads to thick filaments that interfere with cell separation. Coexpression of eutQ with eutSMNLK permits E.coli to make cells with more than one mobile BMC, as is usual in vivo. May play a role in BMC shell biogenesis. Can replace homolog pduA in the pdu operon, cells grow better than wild-type on 1,2-propanediol and vitamin B12. Protein is incorporated into the pdu BMC microcompartment. The ethanolamine (EA) catabolic bacterial microcompartment (BMC) probably concentrates low levels of ethanolamine catabolic enzymes, concentrates volatile reaction intermediates, keeps the level of toxic acetaldehyde low, generates enough acetyl-CoA to support cell growth, and maintains a pool of free coenzyme A (CoA) and NAD. Deletion of BMC genes (eutK, eutL, eutM) restores growth of eutD deletions, suggesting there are dedicated pools of coenzyme A (CoA) and NAD in the BMC. Its function is as follows. Expression of the eut operon allows this bacteria to use ethanolamine as a carbon, nitrogen and energy source. It relies on cobalamin (vitamin B12) both as a cofactor for the ethanolamine ammonia-lyase (EAL) activity and to induce the operon. EA enhances bacterial survival in macrophages in a concentration-dependent manner, suggesting it is an important nutrient during infection. The polypeptide is Bacterial microcompartment shell protein EutM (Salmonella typhimurium (strain LT2 / SGSC1412 / ATCC 700720)).